The primary structure comprises 793 residues: Phenylalanine--tRNA ligase beta subunit (793 aa).

Residues 39–154 (TCSFSSIITA…ENTPLGESAC (116 aa)) enclose the tRNA-binding domain. Positions 403–481 (PQASTLSFRT…QPWKVENKKA (79 aa)) constitute a B5 domain. Mg(2+) is bound by residues Asp457, Asp463, Glu466, and Glu467. Residues 697-793 (PIYPSSFRDI…QINDTKGTID (97 aa)) enclose the FDX-ACB domain.

Belongs to the phenylalanyl-tRNA synthetase beta subunit family. Type 1 subfamily. As to quaternary structure, tetramer of two alpha and two beta subunits. It depends on Mg(2+) as a cofactor.

The protein localises to the cytoplasm. The enzyme catalyses tRNA(Phe) + L-phenylalanine + ATP = L-phenylalanyl-tRNA(Phe) + AMP + diphosphate + H(+). The chain is Phenylalanine--tRNA ligase beta subunit from Chlamydia caviae (strain ATCC VR-813 / DSM 19441 / 03DC25 / GPIC) (Chlamydophila caviae).